A 734-amino-acid polypeptide reads, in one-letter code: MALRFPRFSQGLAQDPTTRRIWFGIATAHDFESHDDITEERLYQNIFASHFGQLAIIFLWTSGNLFHVAWQGNFETWIQDPLHVRPIAHAIWDPHFGQPAVEAFTRGGALGPVNIAYSGVYQWWYTIGLRTNEDLYTGALFLLFLSALSLIGGWLHLQPKWKPRVSWFKNAESRLNHHLSGLFGVSSLAWTGHLVHVAIPASRGEYVRWNNFLNVLPHPQGLGPLFTGQWNLYAQNPDSSSHLFGTSQGSGTAILTLLGGFHPQTQSLWLTDMAHHHLAIAILFLIAGHMYRTNFGIGHSIKDLLEAHIPPGGRLGRGHKGLYDTINNSIHFQLGLALASLGVITSLVAQHMYSLPAYAFIAQDFTTQAALYTHHQYIAGFIMTGAFAHGAIFFIRDYNPEQNEDNVLARMLDHKEAIISHLSWASLFLGFHTLGLYVHNDVMLAFGTPEKQILIEPIFAQWIQSAHGKTSYGFDVLLSSTNGPAFNAGRSIWLPGWLNAINENSNSLFLTIGPGDFLVHHAIALGLHTTTLILVKGALDARGSKLMPDKKDFGYSFPCDGPGRGGTCDISAWDAFYLAVFWMLNTIGWVTFYWHWKHITLWQGNVSQFNESSTYLMGWLRDYLWLNSSQLINGYNPFGMNSLSVWAWMFLFGHLVWATGFMFLISWRGYWQELIETLAWAHERTPLANLIRWKDKPVALSIVQARLVGLAHFSVGYIFTYAAFLIASTSGKFG.

Transmembrane regions (helical) follow at residues 46-69 (IFAS…FHVA), 135-158 (LYTG…LHLQ), 175-199 (LNHH…HVAI), 273-291 (MAHH…GHMY), 330-353 (IHFQ…QHMY), 369-395 (AALY…IFFI), 417-439 (AIIS…LYVH), and 517-535 (FLVH…LILV). The [4Fe-4S] cluster site is built by Cys-559 and Cys-568. Helical transmembrane passes span 575–596 (AFYL…YWHW) and 643–665 (LSVW…MFLI). Chlorophyll a is bound by residues His-654, Met-662, and Tyr-670. Trp-671 contributes to the phylloquinone binding site. Residues 707–727 (LVGLAHFSVGYIFTYAAFLIA) form a helical membrane-spanning segment.

Belongs to the PsaA/PsaB family. The PsaA/B heterodimer binds the P700 chlorophyll special pair and subsequent electron acceptors. PSI consists of a core antenna complex that captures photons, and an electron transfer chain that converts photonic excitation into a charge separation. The eukaryotic PSI reaction center is composed of at least 11 subunits. P700 is a chlorophyll a/chlorophyll a' dimer, A0 is one or more chlorophyll a, A1 is one or both phylloquinones and FX is a shared 4Fe-4S iron-sulfur center. is required as a cofactor.

It is found in the plastid. It localises to the chloroplast thylakoid membrane. The enzyme catalyses reduced [plastocyanin] + hnu + oxidized [2Fe-2S]-[ferredoxin] = oxidized [plastocyanin] + reduced [2Fe-2S]-[ferredoxin]. PsaA and PsaB bind P700, the primary electron donor of photosystem I (PSI), as well as the electron acceptors A0, A1 and FX. PSI is a plastocyanin-ferredoxin oxidoreductase, converting photonic excitation into a charge separation, which transfers an electron from the donor P700 chlorophyll pair to the spectroscopically characterized acceptors A0, A1, FX, FA and FB in turn. Oxidized P700 is reduced on the lumenal side of the thylakoid membrane by plastocyanin. This is Photosystem I P700 chlorophyll a apoprotein A2 from Arabis hirsuta (Hairy rock-cress).